The primary structure comprises 531 residues: CTP synthase (531 aa).

The amidoligase domain stretch occupies residues 1–267 (MTKYIIITGG…ASKILSKLNL (267 aa)). Residue S13 coordinates CTP. S13 provides a ligand contact to UTP. 14 to 19 (SVGKGT) is a binding site for ATP. An L-glutamine-binding site is contributed by Y54. D71 contacts ATP. The Mg(2+) site is built by D71 and E141. CTP is bound by residues 148–150 (DIE), 188–193 (KTKPLQ), and K224. Residues 188 to 193 (KTKPLQ) and K224 contribute to the UTP site. Positions 292-531 (KIALVGKYTK…IGFLRAAAGV (240 aa)) constitute a Glutamine amidotransferase type-1 domain. G355 lines the L-glutamine pocket. C382 serves as the catalytic Nucleophile; for glutamine hydrolysis. L-glutamine is bound by residues 383–386 (YGMQ), E406, and R463. Catalysis depends on residues H507 and E509.

It belongs to the CTP synthase family. In terms of assembly, homotetramer.

The catalysed reaction is UTP + L-glutamine + ATP + H2O = CTP + L-glutamate + ADP + phosphate + 2 H(+). It catalyses the reaction L-glutamine + H2O = L-glutamate + NH4(+). The enzyme catalyses UTP + NH4(+) + ATP = CTP + ADP + phosphate + 2 H(+). The protein operates within pyrimidine metabolism; CTP biosynthesis via de novo pathway; CTP from UDP: step 2/2. Allosterically activated by GTP, when glutamine is the substrate; GTP has no effect on the reaction when ammonia is the substrate. The allosteric effector GTP functions by stabilizing the protein conformation that binds the tetrahedral intermediate(s) formed during glutamine hydrolysis. Inhibited by the product CTP, via allosteric rather than competitive inhibition. Its function is as follows. Catalyzes the ATP-dependent amination of UTP to CTP with either L-glutamine or ammonia as the source of nitrogen. Regulates intracellular CTP levels through interactions with the four ribonucleotide triphosphates. This is CTP synthase from Sulfurisphaera tokodaii (strain DSM 16993 / JCM 10545 / NBRC 100140 / 7) (Sulfolobus tokodaii).